A 150-amino-acid polypeptide reads, in one-letter code: Transcriptional regulator MraZ (150 aa).

SpoVT-AbrB domains are found at residues 11–53 (TYTP…PFDE) and 82–125 (AVDQ…NKDT).

Belongs to the MraZ family. In terms of assembly, forms oligomers.

It is found in the cytoplasm. It localises to the nucleoid. The protein is Transcriptional regulator MraZ of Bifidobacterium longum (strain NCC 2705).